Here is a 354-residue protein sequence, read N- to C-terminus: Guanine nucleotide-binding protein G(i) subunit alpha (354 aa).

G2 carries N-myristoyl glycine lipidation. Residue C3 is the site of S-palmitoyl cysteine attachment. One can recognise a G-alpha domain in the interval 32–354 (REVKLLLLGA…KNNLKDCGLF (323 aa)). The segment at 35–48 (KLLLLGAGESGKST) is G1 motif. Residues 40–47 (GAGESGKS), 175–181 (LRTRVKT), 200–204 (DVGGQ), 269–272 (NKKD), and A326 contribute to the GTP site. 2 residues coordinate Mg(2+): S47 and T181. The interval 173-181 (DVLRTRVKT) is G2 motif. The G3 motif stretch occupies residues 196–205 (FKMFDVGGQR). Positions 265-272 (ILFLNKKD) are G4 motif. Residues 324–329 (TCATDT) are G5 motif.

It belongs to the G-alpha family. G(i/o/t/z) subfamily. G proteins are composed of 3 units; alpha, beta and gamma. The alpha chain contains the guanine nucleotide binding site.

Its function is as follows. Guanine nucleotide-binding proteins (G proteins) are involved as modulators or transducers in various transmembrane signaling systems. The G(i) proteins are involved in hormonal regulation of adenylate cyclase: they inhibit the cyclase in response to beta-adrenergic stimuli. The chain is Guanine nucleotide-binding protein G(i) subunit alpha from Lymnaea stagnalis (Great pond snail).